Consider the following 211-residue polypeptide: MPLLGDDFPELKVQTTHGPMNIPGDLKGSWFVLFSHPADFTPVCTTEFVAFQQRVEAFEKIGCKLIGMSVDQVFSHIKWVEWIKENLDVDITFPIVAANDRIANKLGMLHPGKGTNTVRAVFVGDPNGKVRLVLYYPQEIGRNMDEILRAVKVLQISDSNKVAMPADWPNNLLIKDHVIIPPANNVEDAKKRKEQQYDCYDWWFCHKPLDK.

Positions 2-156 (PLLGDDFPEL…ILRAVKVLQI (155 aa)) constitute a Thioredoxin domain. C44 functions as the Cysteine sulfenic acid (-SOH) intermediate in the catalytic mechanism. A substrate-binding site is contributed by R119. C199 and C205 are oxidised to a cystine.

It belongs to the peroxiredoxin family. Prx6 subfamily. In terms of assembly, homodecamer. Pentamer of dimers that assemble into a ring structure.

It localises to the cytoplasm. It carries out the reaction a hydroperoxide + [thioredoxin]-dithiol = an alcohol + [thioredoxin]-disulfide + H2O. In terms of biological role, thiol-specific peroxidase that catalyzes the reduction of hydrogen peroxide and organic hydroperoxides to water and alcohols, respectively. Plays a role in cell protection against oxidative stress by detoxifying peroxides. This Chlorobaculum tepidum (strain ATCC 49652 / DSM 12025 / NBRC 103806 / TLS) (Chlorobium tepidum) protein is Peroxiredoxin.